Consider the following 430-residue polypeptide: Adenylosuccinate synthetase (430 aa).

Residues 13–19 and 41–43 contribute to the GTP site; these read GDEGKGK and GHT. The Proton acceptor role is filled by aspartate 14. Aspartate 14 and glycine 41 together coordinate Mg(2+). IMP-binding positions include 14–17, 39–42, threonine 130, arginine 144, glutamine 225, threonine 240, and arginine 304; these read DEGK and NAGH. The Proton donor role is filled by histidine 42. 300–306 contributes to the substrate binding site; the sequence is ASTGRPR. Residues arginine 306, 332-334, and 414-416 each bind GTP; these read KLD and STG.

The protein belongs to the adenylosuccinate synthetase family. In terms of assembly, homodimer. The cofactor is Mg(2+).

The protein resides in the cytoplasm. It carries out the reaction IMP + L-aspartate + GTP = N(6)-(1,2-dicarboxyethyl)-AMP + GDP + phosphate + 2 H(+). It participates in purine metabolism; AMP biosynthesis via de novo pathway; AMP from IMP: step 1/2. Plays an important role in the de novo pathway of purine nucleotide biosynthesis. Catalyzes the first committed step in the biosynthesis of AMP from IMP. The sequence is that of Adenylosuccinate synthetase from Stenotrophomonas maltophilia (strain R551-3).